Consider the following 378-residue polypeptide: AT-hook motif nuclear-localized protein 5 (378 aa).

Disordered regions lie at residues 30-70 (QVAS…AEHR), 88-160 (VQPT…GRKQ), and 302-378 (NNNK…LTRG). Basic residues predominate over residues 104-113 (VKKKRGRPRK). The Bipartite nuclear localization signal motif lies at 105–113 (KKKRGRPRK). DNA-binding regions (a.T hook) lie at residues 105 to 117 (KKKR…YVPD) and 147 to 159 (KRAR…TGRK). The 144-residue stretch at 171-314 (TSAGLAFAPH…KTIKQEIKPK (144 aa)) folds into the PPC domain. 2 stretches are compositionally biased toward polar residues: residues 316–327 (EPTNSEMETTPG) and 335–345 (STGQHTPQNFP).

As to quaternary structure, interacts with AHL29.

It is found in the nucleus. Transcription factor that specifically binds AT-rich DNA sequences related to the nuclear matrix attachment regions (MARs). The protein is AT-hook motif nuclear-localized protein 5 of Arabidopsis thaliana (Mouse-ear cress).